Reading from the N-terminus, the 304-residue chain is UDP-3-O-acyl-N-acetylglucosamine deacetylase (304 aa).

Zn(2+)-binding residues include histidine 78, histidine 237, and aspartate 241. Catalysis depends on histidine 264, which acts as the Proton donor.

Belongs to the LpxC family. Requires Zn(2+) as cofactor.

It catalyses the reaction a UDP-3-O-[(3R)-3-hydroxyacyl]-N-acetyl-alpha-D-glucosamine + H2O = a UDP-3-O-[(3R)-3-hydroxyacyl]-alpha-D-glucosamine + acetate. The protein operates within glycolipid biosynthesis; lipid IV(A) biosynthesis; lipid IV(A) from (3R)-3-hydroxytetradecanoyl-[acyl-carrier-protein] and UDP-N-acetyl-alpha-D-glucosamine: step 2/6. Catalyzes the hydrolysis of UDP-3-O-myristoyl-N-acetylglucosamine to form UDP-3-O-myristoylglucosamine and acetate, the committed step in lipid A biosynthesis. The chain is UDP-3-O-acyl-N-acetylglucosamine deacetylase from Nitrosococcus oceani (strain ATCC 19707 / BCRC 17464 / JCM 30415 / NCIMB 11848 / C-107).